A 91-amino-acid chain; its full sequence is Putative septation protein SpoVG (91 aa).

Belongs to the SpoVG family.

Its function is as follows. Could be involved in septation. The protein is Putative septation protein SpoVG of Clostridium botulinum (strain Alaska E43 / Type E3).